We begin with the raw amino-acid sequence, 183 residues long: UPF0200 protein Memar_1556 (183 aa).

8–15 (GMPASGKG) is an ATP binding site.

The protein belongs to the UPF0200 family.

This Methanoculleus marisnigri (strain ATCC 35101 / DSM 1498 / JR1) protein is UPF0200 protein Memar_1556.